The chain runs to 956 residues: Translation initiation factor IF-2 (956 aa).

The interval 33-370 (SHASSVEEAD…PVTERKFHEL (338 aa)) is disordered. The segment covering 46 to 60 (IASSFSAGVTKNVQA) has biased composition (polar residues). Over residues 63-73 (AKDKQVAEQKA) the composition is skewed to basic and acidic residues. Positions 76–100 (AKATTPQPAASKAAEKPAAATQEAS) are enriched in low complexity. Basic and acidic residues-rich tracts occupy residues 112 to 125 (FKAE…EQVA), 134 to 143 (SNDRKSDYRQ), and 179 to 192 (NDGH…DKNR). Low complexity predominate over residues 199 to 213 (RQQDTGRQGQTQAGA). Basic and acidic residues-rich tracts occupy residues 234–258 (ARQR…RQEA) and 266–276 (QTEDKKHREAS). Residues 277 to 293 (AKATESVASMAAASVAK) are compositionally biased toward low complexity. The segment covering 303–320 (NRPDKGHDRDHGLEDGQK) has biased composition (basic and acidic residues). Positions 325–343 (SWNSQNQVRNQKNSNWNNN) are enriched in low complexity. The span at 344-354 (KKNKKGKHHKN) shows a compositional bias: basic residues. In terms of domain architecture, tr-type G spans 457 to 626 (ERAPVVTIMG…LLVAEVEELK (170 aa)). The tract at residues 466–473 (GHVDHGKT) is G1. Residue 466–473 (GHVDHGKT) participates in GTP binding. Residues 491–495 (GITQH) are G2. Positions 512 to 515 (DTPG) are G3. GTP is bound by residues 512 to 516 (DTPGH) and 566 to 569 (NKID). The G4 stretch occupies residues 566 to 569 (NKID). A G5 region spans residues 602 to 604 (SAK).

It belongs to the TRAFAC class translation factor GTPase superfamily. Classic translation factor GTPase family. IF-2 subfamily.

The protein resides in the cytoplasm. Its function is as follows. One of the essential components for the initiation of protein synthesis. Protects formylmethionyl-tRNA from spontaneous hydrolysis and promotes its binding to the 30S ribosomal subunits. Also involved in the hydrolysis of GTP during the formation of the 70S ribosomal complex. This chain is Translation initiation factor IF-2, found in Streptococcus equi subsp. equi (strain 4047).